Consider the following 710-residue polypeptide: uncharacterized protein (710 aa).

The interval 1-20 (MKQRQARLIGTPSQTRRQQE) is disordered. Residues 13 to 42 (SQTRRQQELAEKLEKVKEVLEDEKKRQFNE) adopt a coiled-coil conformation.

The protein belongs to the IIV-6 268L family.

This is an uncharacterized protein from Invertebrate iridescent virus 6 (IIV-6).